The primary structure comprises 303 residues: Protein bottleneck (303 aa).

Disordered stretches follow at residues 102-142 (SKRN…PTVT) and 185-272 (VATT…ASVR). 2 stretches are compositionally biased toward low complexity: residues 115-138 (RQQEQRQPQEQPLQQEELQHQQQE) and 185-197 (VATTTANSSTANS). Polar residues predominate over residues 260 to 272 (ATISRQSSSASVR).

As to expression, restricted to the blastoderm.

Its subcellular location is the cytoplasm. It localises to the cytoskeleton. In terms of biological role, acts as a regulator of the microfilament network governing cellularization of the embryo. Determines the timing of a key conformational transition in the cortical microfilament network: the proper coordination of membrane invagination and basal closure of the cells. To do this, bnk possibly physically links neighboring contractile units of the early cycle 14 microfilament network in a manner that prevents basal constriction until the proper stage has been reached. Bnk together with nullo and Sry-alpha may provide auxiliary functions, by acting both to stabilize a large and dynamic microfilament structure and regulate its functions. In Drosophila melanogaster (Fruit fly), this protein is Protein bottleneck (bnk).